We begin with the raw amino-acid sequence, 297 residues long: Calponin-1 (297 aa).

Residues 28-131 enclose the Calponin-homology (CH) domain; the sequence is HQREQELREW…STLLALASMA (104 aa). Calponin-like repeat units follow at residues 164–189, 204–229, and 243–268; these read IGLQ…RHLY, ISLQ…RQIF, and VSLQ…RQVY. Threonine 170 is subject to Phosphothreonine; by ROCK2. Serine 175 is subject to Phosphoserine; by ROCK2. Residues threonine 180 and threonine 184 each carry the phosphothreonine; by ROCK2 modification. Threonine 259 is modified (phosphothreonine; by ROCK2).

The protein belongs to the calponin family. In terms of assembly, part of cGMP kinase signaling complex at least composed of ACTA2/alpha-actin, CNN1/calponin H1, PLN/phospholamban, PRKG1 and ITPR1. In terms of tissue distribution, smooth muscle, and tissues containing significant amounts of smooth muscle.

Its function is as follows. Thin filament-associated protein that is implicated in the regulation and modulation of smooth muscle contraction. It is capable of binding to actin, calmodulin and tropomyosin. The interaction of calponin with actin inhibits the actomyosin Mg-ATPase activity. This Mus musculus (Mouse) protein is Calponin-1 (Cnn1).